Consider the following 331-residue polypeptide: Nucleotide sugar transporter SLC35B4 (331 aa).

The next 11 membrane-spanning stretches (helical) occupy residues 4 to 24 (ALAV…LELL), 30 to 50 (GCGN…GFLF), 59 to 79 (PAIP…VSVV), 92 to 112 (LHMI…IIIL), 117 to 137 (SIFK…CTFM), 153 to 173 (GFQA…ALLM), 201 to 221 (ALPL…AVLF), 229 to 249 (IPVI…NIIT), 251 to 267 (YVCI…CASL), 268 to 288 (TVTL…ILYF), and 291 to 311 (PFTL…LMYT). Positions 326–331 (KDSKKN) match the Mediates endoplasmic reticulum retention motif.

It belongs to the nucleotide-sugar transporter family. SLC35B subfamily.

The protein localises to the endoplasmic reticulum membrane. The catalysed reaction is UDP-N-acetyl-alpha-D-glucosamine(in) + UDP-alpha-D-glucuronate(out) = UDP-N-acetyl-alpha-D-glucosamine(out) + UDP-alpha-D-glucuronate(in). It carries out the reaction UDP-alpha-D-xylose(in) + UDP-alpha-D-glucuronate(out) = UDP-alpha-D-xylose(out) + UDP-alpha-D-glucuronate(in). Antiporter that transports nucleotide sugars across the endoplasmic reticulum (ER) membrane in exchange for another nucleotide sugar. May couple UDP-alpha-D-glucuronate (UDP-GlcA) or UDP-alpha-D-xylose (UDP-Xyl) efflux to UDP-alpha-D-glucuronate (UDP-GlcA) influx into the ER lumen, which in turn stimulates glucuronidation and excretion of endobiotics and xenobiotics. The polypeptide is Nucleotide sugar transporter SLC35B4 (SLC35B4) (Pongo abelii (Sumatran orangutan)).